We begin with the raw amino-acid sequence, 601 residues long: Glutathione-regulated potassium-efflux system protein KefB (601 aa).

Transmembrane regions (helical) follow at residues 5–25 (DLLL…PLAA), 29–49 (IGAV…GLGF), 55–75 (EILH…GLEL), 87–107 (IFGV…GLLM), 115–135 (AAVI…LQLM), 152–172 (VLLF…LLAG), 177–197 (HFDW…LIGG), 207–227 (FIAA…LVLG), 230–250 (LFMD…GILL), 261–281 (IAID…VGMA), 284–304 (LGVL…LVAV), 326–346 (FAGV…TAAS), and 356–376 (ALLL…MKLI). The RCK N-terminal domain maps to 400–518 (KPQVIVVGFG…QAGVTNFSRE (119 aa)).

The protein belongs to the monovalent cation:proton antiporter 2 (CPA2) transporter (TC 2.A.37) family. KefB subfamily. As to quaternary structure, interacts with the regulatory subunit KefG.

It localises to the cell inner membrane. Pore-forming subunit of a potassium efflux system that confers protection against electrophiles. Catalyzes K(+)/H(+) antiport. The chain is Glutathione-regulated potassium-efflux system protein KefB from Enterobacter sp. (strain 638).